The primary structure comprises 113 residues: MARSSAVCFLLLLAFLIGTASAITCGQVDSDLTSCLGYARKGGVIPPGCCAGVRTLNNLAKTTPDRQTACNCLKSLVNPSLGLNAAIVAGIPGKCGVNIPYPIRMQTDCNKVR.

Residues 1–22 form the signal peptide; the sequence is MARSSAVCFLLLLAFLIGTASA. 4 disulfide bridges follow: Cys25-Cys72, Cys35-Cys49, Cys50-Cys95, and Cys70-Cys109.

Belongs to the plant LTP family. Highly expressed in style and stigma, abundant in young leaves and petals, and low expression in young anthers at pollen mother cell stage with an active tapetum. Not expressed in mature leaves or in pollen grains or tubes. Found in the stylar transmitting tract epidermis and in the stylar extracellular matrix.

Functionally, acts as an adhesive agent between the pollen tube wall and the stylar transmitting tract epidermis. Binds a stylar pectin in a pH-dependent manner. Enhances activity of chemocyanin, a diffusible chemotropic factor. This is Stigma/stylar cysteine-rich adhesin (SCA) from Lilium longiflorum (Trumpet lily).